Consider the following 490-residue polypeptide: Aspartyl/glutamyl-tRNA(Asn/Gln) amidotransferase subunit B (490 aa).

Belongs to the GatB/GatE family. GatB subfamily. As to quaternary structure, heterotrimer of A, B and C subunits.

It carries out the reaction L-glutamyl-tRNA(Gln) + L-glutamine + ATP + H2O = L-glutaminyl-tRNA(Gln) + L-glutamate + ADP + phosphate + H(+). The catalysed reaction is L-aspartyl-tRNA(Asn) + L-glutamine + ATP + H2O = L-asparaginyl-tRNA(Asn) + L-glutamate + ADP + phosphate + 2 H(+). Allows the formation of correctly charged Asn-tRNA(Asn) or Gln-tRNA(Gln) through the transamidation of misacylated Asp-tRNA(Asn) or Glu-tRNA(Gln) in organisms which lack either or both of asparaginyl-tRNA or glutaminyl-tRNA synthetases. The reaction takes place in the presence of glutamine and ATP through an activated phospho-Asp-tRNA(Asn) or phospho-Glu-tRNA(Gln). The protein is Aspartyl/glutamyl-tRNA(Asn/Gln) amidotransferase subunit B of Burkholderia mallei (strain NCTC 10247).